A 570-amino-acid polypeptide reads, in one-letter code: Putative diflavin flavoprotein A 6 (570 aa).

The interval 38-231 is zinc metallo-hydrolase; that stretch reads AKGTTANSYL…FPTRLYATGH (194 aa). One can recognise a Flavodoxin-like domain in the interval 260–402; that stretch reads VALIYASAYG…AGTDFAQALK (143 aa). A flavodoxin-reductase-like region spans residues 421–570; that stretch reads VGRIVGSLCV…VHHRKSGNHY (150 aa).

The protein in the N-terminal section; belongs to the zinc metallo-hydrolase group 3 family. In the C-terminal section; belongs to the flavodoxin reductase family. Requires Fe cation as cofactor.

Its function is as follows. Mediates electron transfer from NADH to oxygen, reducing it to water. This modular protein has 3 redox cofactors, in other organisms the same activity requires 2 or 3 proteins. The polypeptide is Putative diflavin flavoprotein A 6 (dfa6) (Nostoc sp. (strain PCC 7120 / SAG 25.82 / UTEX 2576)).